Here is a 739-residue protein sequence, read N- to C-terminus: DNA ligase (739 aa).

Residues 34-38 (DADYD), 83-84 (SL), and Glu117 contribute to the NAD(+) site. Residue Lys119 is the N6-AMP-lysine intermediate of the active site. Residues Arg140, Glu175, Lys291, and Lys315 each coordinate NAD(+). 4 residues coordinate Zn(2+): Cys420, Cys423, Cys438, and Cys444. Residues 660-739 (ADDSPVAGKT…DGWLDLIGQA (80 aa)) enclose the BRCT domain.

This sequence belongs to the NAD-dependent DNA ligase family. LigA subfamily. The cofactor is Mg(2+). Requires Mn(2+) as cofactor.

The catalysed reaction is NAD(+) + (deoxyribonucleotide)n-3'-hydroxyl + 5'-phospho-(deoxyribonucleotide)m = (deoxyribonucleotide)n+m + AMP + beta-nicotinamide D-nucleotide.. Functionally, DNA ligase that catalyzes the formation of phosphodiester linkages between 5'-phosphoryl and 3'-hydroxyl groups in double-stranded DNA using NAD as a coenzyme and as the energy source for the reaction. It is essential for DNA replication and repair of damaged DNA. The chain is DNA ligase from Ruegeria sp. (strain TM1040) (Silicibacter sp.).